A 150-amino-acid polypeptide reads, in one-letter code: Large ribosomal subunit protein uL23m (150 aa).

It belongs to the universal ribosomal protein uL23 family. In terms of assembly, component of the mitochondrial ribosome large subunit (39S) which comprises a 16S rRNA and about 50 distinct proteins.

Its subcellular location is the mitochondrion. This Drosophila melanogaster (Fruit fly) protein is Large ribosomal subunit protein uL23m (mRpL23).